The following is a 447-amino-acid chain: Acid phosphatase (447 aa).

The N-terminal stretch at 1–17 (MKPSVATLLATVSLVYA) is a signal peptide. 5 N-linked (GlcNAc...) asparagine glycosylation sites follow: asparagine 119, asparagine 150, asparagine 177, asparagine 186, and asparagine 208. The Proton donor role is filled by aspartate 215. Residues asparagine 217, asparagine 234, asparagine 240, asparagine 315, asparagine 332, asparagine 382, and asparagine 405 are each glycosylated (N-linked (GlcNAc...) asparagine). Residue serine 419 is the site of GPI-like-anchor amidated serine attachment. The propeptide at 420 to 447 (ASSNAAVSAVAPAAGVSGLLLGLALNLL) is removed in mature form.

Post-translationally, the GPI-like anchor contains a phosphoceramide lipid group. The anchor position has not been determined.

It is found in the cell membrane. It carries out the reaction a phosphate monoester + H2O = an alcohol + phosphate. Inhibited by NaF, molybdate and vanadate. Has both phosphomonoesterase and phosphodiesterase activity. Cleaves a broad range of phosphate esters. This is Acid phosphatase (phoA) from Aspergillus fumigatus (strain ATCC MYA-4609 / CBS 101355 / FGSC A1100 / Af293) (Neosartorya fumigata).